A 619-amino-acid polypeptide reads, in one-letter code: Probable transporter mch1 (619 aa).

Helical transmembrane passes span 88 to 108 (VISCLGAGSITAFSLYGPLFL), 120 to 140 (AVSIAAEISMYLPVPLFGYLC), 147 to 167 (PLALLSGLVFGGGYLLAAFAY), 184 to 204 (VMVVAFVAIGTATSCMYLAAV), 219 to 239 (IMLAVPIAGFGLSGMWQSQVA), 261 to 281 (FLFLALFLFCLGVIGTFGLRI), 377 to 397 (TMWWLAVGFFLVTGPGEAYIN), 428 to 448 (IIALTSTIARLLTGSLSDFFA), 480 to 500 (LAFLLPSALLLSLGYLLLSSP), 515 to 535 (LIGLGYGSAFSLVPIIISVVW), 541 to 561 (GTNWGIVAMVPAAGAAMWGVI), and 589 to 609 (FWAVGCTLSVWVAVVAWILAW).

It belongs to the major facilitator superfamily.

The protein resides in the vacuole membrane. Probable transporter. This is Probable transporter mch1 (mch1) from Aspergillus fumigatus (strain ATCC MYA-4609 / CBS 101355 / FGSC A1100 / Af293) (Neosartorya fumigata).